We begin with the raw amino-acid sequence, 146 residues long: Prolactin-inducible protein homolog (146 aa).

Positions 1–28 are cleaved as a signal peptide; the sequence is MRLLQLLFRASPATLLLVLCLQLGANKA. Position 29 is a pyrrolidone carboxylic acid (Gln-29). 2 cysteine pairs are disulfide-bonded: Cys-65–Cys-91 and Cys-89–Cys-123. A glycan (N-linked (GlcNAc...) asparagine) is linked at Asn-105.

This sequence belongs to the PIP family. As to quaternary structure, monomer. Interacts with AZGP1.

The protein localises to the secreted. This chain is Prolactin-inducible protein homolog (PIP), found in Gorilla gorilla gorilla (Western lowland gorilla).